A 434-amino-acid polypeptide reads, in one-letter code: Enolase (434 aa).

Gln-166 is a (2R)-2-phosphoglycerate binding site. The active-site Proton donor is Glu-208. Residues Asp-245, Glu-290, and Asp-317 each contribute to the Mg(2+) site. (2R)-2-phosphoglycerate is bound by residues Lys-342, Arg-371, Ser-372, and Lys-393. Lys-342 functions as the Proton acceptor in the catalytic mechanism.

It belongs to the enolase family. Mg(2+) serves as cofactor.

Its subcellular location is the cytoplasm. The protein localises to the secreted. The protein resides in the cell surface. It catalyses the reaction (2R)-2-phosphoglycerate = phosphoenolpyruvate + H2O. It participates in carbohydrate degradation; glycolysis; pyruvate from D-glyceraldehyde 3-phosphate: step 4/5. Functionally, catalyzes the reversible conversion of 2-phosphoglycerate (2-PG) into phosphoenolpyruvate (PEP). It is essential for the degradation of carbohydrates via glycolysis. In Caldicellulosiruptor bescii (strain ATCC BAA-1888 / DSM 6725 / KCTC 15123 / Z-1320) (Anaerocellum thermophilum), this protein is Enolase.